The following is a 347-amino-acid chain: MNPIVFSTILTTAIMGTVIVMMSSHWLMVWIGFEMNLLAIIPILMKKFNPRAMEASTKYFLTQATASMLLMSAIIINLMHSGQWTITKMFNPTASAIMTSALIMKLGLSPFHFWVPEVTQGISLMSGLILLTWQKLAPMSILYQIAPSINLDMLMTSALLSILVGGWGGLNQTQLRKIMAYSSIAHMGWMTAILTYNPTMTMLNMLIYIMMTLTTFMLLMLNSSTTTLSLSHTWNKTPLITSLILIIMLSLGGLPPLSGFIPKWMIIQELTKNNSIILPTSMAIMALLNLYFYLRLTYSTSLTMFPSTNNMKMKWQFENSKQMSLLPTLIIMSTLLLPLMPTMSILN.

Helical transmembrane passes span 3–23, 25–45, 59–79, 111–131, 149–169, 178–198, 201–221, 242–262, 274–294, and 325–345; these read PIVFSTILTTAIMGTVIVMMS, HWLMVWIGFEMNLLAIIPILM, YFLTQATASMLLMSAIIINLM, FHFWVPEVTQGISLMSGLILL, INLDMLMTSALLSILVGGWGG, IMAYSSIAHMGWMTAILTYNP, TMLNMLIYIMMTLTTFMLLML, SLILIIMLSLGGLPPLSGFIP, NSIILPTSMAIMALLNLYFYL, and LLPTLIIMSTLLLPLMPTMSI.

The protein belongs to the complex I subunit 2 family. In terms of assembly, core subunit of respiratory chain NADH dehydrogenase (Complex I) which is composed of 45 different subunits. Interacts with TMEM242.

The protein localises to the mitochondrion inner membrane. It catalyses the reaction a ubiquinone + NADH + 5 H(+)(in) = a ubiquinol + NAD(+) + 4 H(+)(out). Core subunit of the mitochondrial membrane respiratory chain NADH dehydrogenase (Complex I) which catalyzes electron transfer from NADH through the respiratory chain, using ubiquinone as an electron acceptor. Essential for the catalytic activity and assembly of complex I. This chain is NADH-ubiquinone oxidoreductase chain 2, found in Rhinoceros unicornis (Greater Indian rhinoceros).